The sequence spans 369 residues: Anhydro-N-acetylmuramic acid kinase (369 aa).

ATP is bound at residue 12–19; it reads GTSMDGVD.

Belongs to the anhydro-N-acetylmuramic acid kinase family.

The catalysed reaction is 1,6-anhydro-N-acetyl-beta-muramate + ATP + H2O = N-acetyl-D-muramate 6-phosphate + ADP + H(+). The protein operates within amino-sugar metabolism; 1,6-anhydro-N-acetylmuramate degradation. It participates in cell wall biogenesis; peptidoglycan recycling. In terms of biological role, catalyzes the specific phosphorylation of 1,6-anhydro-N-acetylmuramic acid (anhMurNAc) with the simultaneous cleavage of the 1,6-anhydro ring, generating MurNAc-6-P. Is required for the utilization of anhMurNAc either imported from the medium or derived from its own cell wall murein, and thus plays a role in cell wall recycling. The sequence is that of Anhydro-N-acetylmuramic acid kinase from Shewanella woodyi (strain ATCC 51908 / MS32).